A 177-amino-acid polypeptide reads, in one-letter code: MSRVAKAPVTLPNGVSVTLNDRQVEVKGKNGNMSLRLHELVELKQEDDLIIFSPTVDSKEAMMHAGTMRSLLNNLVIGVNEGFEKRLLLIGVGYRAQATGNKVTLNVGYSHPVEYTLPEGVSAETPTQTEIVLKSNDKQQLGQAAANIRGFRPPEPYKGKGIRYSDEHVIRKEAKKK.

It belongs to the universal ribosomal protein uL6 family. As to quaternary structure, part of the 50S ribosomal subunit.

Its function is as follows. This protein binds to the 23S rRNA, and is important in its secondary structure. It is located near the subunit interface in the base of the L7/L12 stalk, and near the tRNA binding site of the peptidyltransferase center. This chain is Large ribosomal subunit protein uL6, found in Psychrobacter arcticus (strain DSM 17307 / VKM B-2377 / 273-4).